Reading from the N-terminus, the 101-residue chain is MIPGEYQIQPGDIELNVGRRTVTLSVANSGDRPIQVGSHYHFFETNDALTFDRAASRGMRLNIPAGTAVRFEPGQSREIELVDLSGGRRVFGFAGRIMGDL.

It belongs to the urease beta subunit family. Heterotrimer of UreA (gamma), UreB (beta) and UreC (alpha) subunits. Three heterotrimers associate to form the active enzyme.

The protein localises to the cytoplasm. The catalysed reaction is urea + 2 H2O + H(+) = hydrogencarbonate + 2 NH4(+). Its pathway is nitrogen metabolism; urea degradation; CO(2) and NH(3) from urea (urease route): step 1/1. This chain is Urease subunit beta, found in Pseudomonas fluorescens (strain SBW25).